We begin with the raw amino-acid sequence, 446 residues long: DDB1- and CUL4-associated factor 12 (446 aa).

The span at 1–12 (MTRRAVSRKRRA) shows a compositional bias: basic residues. The interval 1 to 33 (MTRRAVSRKRRAAPGTGPGEQSDWDHSAHKRKR) is disordered. WD repeat units lie at residues 132–173 (SHQS…PVCV), 177–215 (GHNDWIFSIAWISDTMAVSGSRDGSMALWEMTEEILSKS), 245–284 (PVNCKVRALAFNSKNKELGAVSLDGFFHLWKAELTLAKLL), and 333–370 (EQGSGIRSVSFYEHIVTVGTGQGALLFYDIRAQRFLED).

Belongs to the WD repeat DCAF12 family. In terms of assembly, component of the DCX(DCAF12) E3 ubiquitin ligase complex, at least composed of cul4 (cul4a or cul4b), ddb1, dcaf12 and rbx1.

The protein localises to the cytoplasm. Its subcellular location is the cytoskeleton. It is found in the microtubule organizing center. It localises to the centrosome. The protein resides in the nucleus. It participates in protein modification; protein ubiquitination. Functionally, substrate-recognition component of a DCX (DDB1-CUL4-X-box) E3 ubiquitin-protein ligase complex of the DesCEND (destruction via C-end degrons) pathway, which recognizes a C-degron located at the extreme C terminus of target proteins, leading to their ubiquitination and degradation. The C-degron recognized by the DesCEND pathway is usually a motif of less than ten residues and can be present in full-length proteins, truncated proteins or proteolytically cleaved forms. The DCX(DCAF12) complex specifically recognizes proteins with a diglutamate (Glu-Glu) at the C-terminus leading to their ubiquitination and degradation. Also directly recognizes the C-terminal glutamate-leucine (Glu-Leu) degron as an alternative degron in proteins leading to their ubiquitination and degradation. This Xenopus tropicalis (Western clawed frog) protein is DDB1- and CUL4-associated factor 12.